A 129-amino-acid chain; its full sequence is Small ribosomal subunit protein uS11 (129 aa).

The protein belongs to the universal ribosomal protein uS11 family. As to quaternary structure, part of the 30S ribosomal subunit. Interacts with proteins S7 and S18. Binds to IF-3.

Functionally, located on the platform of the 30S subunit, it bridges several disparate RNA helices of the 16S rRNA. Forms part of the Shine-Dalgarno cleft in the 70S ribosome. In Nitratidesulfovibrio vulgaris (strain ATCC 29579 / DSM 644 / CCUG 34227 / NCIMB 8303 / VKM B-1760 / Hildenborough) (Desulfovibrio vulgaris), this protein is Small ribosomal subunit protein uS11.